The following is a 535-amino-acid chain: Flavonoid 3'-monooxygenase CYP75B4 (535 aa).

A helical membrane pass occupies residues 8-28 (ISTSLLLTTVALSVIVCYALV). Cys-469 serves as a coordination point for heme.

It belongs to the cytochrome P450 family. Requires heme as cofactor.

It is found in the membrane. It catalyses the reaction a 3'-unsubstituted flavone + reduced [NADPH--hemoprotein reductase] + O2 = a 3'-hydroxyflavone + oxidized [NADPH--hemoprotein reductase] + H2O + H(+). It participates in secondary metabolite biosynthesis; flavonoid biosynthesis. Its function is as follows. Catalyzes the 3'-hydroxylation of the flavonoid B-ring to the 3',4'-hydroxylated state. Catalyzes in vitro 3'-hydroxylation of different flavonoids. Catalyzes the conversion of apigenin to luteolin, naringenin to eriodictyol, and kaempferol to quercetin. Possesses specific 5'-hydroxylase activity toward chrysoeriol (a 3'-methoxylated flavone) and is indispensable for tricin formation. Converts chrysoeriol to selgin, a precursor of tricin, suggesting that chrysoeriol, instead of tricetin, is an intermediate in tricin biosynthesis. The sequence is that of Flavonoid 3'-monooxygenase CYP75B4 from Oryza sativa subsp. japonica (Rice).